A 269-amino-acid polypeptide reads, in one-letter code: Exodeoxyribonuclease WalJ (269 aa).

A divalent metal cation contacts are provided by H61, H63, D65, H66, and D150.

The protein belongs to the metallo-beta-lactamase superfamily. Fe(2+) is required as a cofactor. Requires Zn(2+) as cofactor. Mn(2+) serves as cofactor.

The protein localises to the cell membrane. Its function is as follows. 5'-&gt;3' double-stranded DNA exonuclease. May be involved in the WalK/WalR signal transduction pathway. Required for accurate coordination of cell division with DNA replication. May play a role in cell wall metabolism. The sequence is that of Exodeoxyribonuclease WalJ from Streptococcus pneumoniae serotype 2 (strain D39 / NCTC 7466).